A 106-amino-acid polypeptide reads, in one-letter code: Pyrimidine/purine nucleoside phosphorylase (106 aa).

Belongs to the nucleoside phosphorylase PpnP family.

It catalyses the reaction a purine D-ribonucleoside + phosphate = a purine nucleobase + alpha-D-ribose 1-phosphate. The enzyme catalyses adenosine + phosphate = alpha-D-ribose 1-phosphate + adenine. It carries out the reaction cytidine + phosphate = cytosine + alpha-D-ribose 1-phosphate. The catalysed reaction is guanosine + phosphate = alpha-D-ribose 1-phosphate + guanine. It catalyses the reaction inosine + phosphate = alpha-D-ribose 1-phosphate + hypoxanthine. The enzyme catalyses thymidine + phosphate = 2-deoxy-alpha-D-ribose 1-phosphate + thymine. It carries out the reaction uridine + phosphate = alpha-D-ribose 1-phosphate + uracil. The catalysed reaction is xanthosine + phosphate = alpha-D-ribose 1-phosphate + xanthine. Catalyzes the phosphorolysis of diverse nucleosides, yielding D-ribose 1-phosphate and the respective free bases. Can use uridine, adenosine, guanosine, cytidine, thymidine, inosine and xanthosine as substrates. Also catalyzes the reverse reactions. In Burkholderia ambifaria (strain MC40-6), this protein is Pyrimidine/purine nucleoside phosphorylase.